Reading from the N-terminus, the 236-residue chain is Small ribosomal subunit protein uS2c (236 aa).

It belongs to the universal ribosomal protein uS2 family.

The protein resides in the plastid. It localises to the chloroplast. This Phaseolus vulgaris (Kidney bean) protein is Small ribosomal subunit protein uS2c (rps2).